Here is a 243-residue protein sequence, read N- to C-terminus: UPF0502 protein Rmet_3697 (243 aa).

Residues 1–11 show a composition bias toward low complexity; sequence MTDTPDTPDTP. Residues 1–23 form a disordered region; that stretch reads MTDTPDTPDTPMATGASSRPPLR.

This sequence belongs to the UPF0502 family.

In Cupriavidus metallidurans (strain ATCC 43123 / DSM 2839 / NBRC 102507 / CH34) (Ralstonia metallidurans), this protein is UPF0502 protein Rmet_3697.